The primary structure comprises 968 residues: Isoleucine--tRNA ligase (968 aa).

Positions 68-78 match the 'HIGH' region motif; sequence PYANGALHMGH. Residue Glu582 participates in L-isoleucyl-5'-AMP binding. The short motif at 623–627 is the 'KMSKS' region element; that stretch reads KMSKS. Lys626 is an ATP binding site. Zn(2+) is bound by residues Cys936, Cys939, Cys956, and Cys959.

This sequence belongs to the class-I aminoacyl-tRNA synthetase family. IleS type 1 subfamily. Monomer. The cofactor is Zn(2+).

It localises to the cytoplasm. It catalyses the reaction tRNA(Ile) + L-isoleucine + ATP = L-isoleucyl-tRNA(Ile) + AMP + diphosphate. Functionally, catalyzes the attachment of isoleucine to tRNA(Ile). As IleRS can inadvertently accommodate and process structurally similar amino acids such as valine, to avoid such errors it has two additional distinct tRNA(Ile)-dependent editing activities. One activity is designated as 'pretransfer' editing and involves the hydrolysis of activated Val-AMP. The other activity is designated 'posttransfer' editing and involves deacylation of mischarged Val-tRNA(Ile). In Prochlorococcus marinus (strain AS9601), this protein is Isoleucine--tRNA ligase.